A 183-amino-acid chain; its full sequence is Ribosome maturation factor RimM (183 aa).

The 80-residue stretch at 104–183 (EGDYYWKDLM…TIEVDWDPGF (80 aa)) folds into the PRC barrel domain.

It belongs to the RimM family. Binds ribosomal protein uS19.

The protein resides in the cytoplasm. An accessory protein needed during the final step in the assembly of 30S ribosomal subunit, possibly for assembly of the head region. Essential for efficient processing of 16S rRNA. May be needed both before and after RbfA during the maturation of 16S rRNA. It has affinity for free ribosomal 30S subunits but not for 70S ribosomes. This Salmonella choleraesuis (strain SC-B67) protein is Ribosome maturation factor RimM.